A 212-amino-acid chain; its full sequence is Ribonuclease HII (212 aa).

An RNase H type-2 domain is found at 19-212 (CIIVGVDEVG…SKISYMFKNS (194 aa)). A divalent metal cation is bound by residues Asp-25, Glu-26, and Asp-120.

It belongs to the RNase HII family. It depends on Mn(2+) as a cofactor. Requires Mg(2+) as cofactor.

Its subcellular location is the cytoplasm. It catalyses the reaction Endonucleolytic cleavage to 5'-phosphomonoester.. Functionally, endonuclease that specifically degrades the RNA of RNA-DNA hybrids. In Ehrlichia ruminantium (strain Welgevonden), this protein is Ribonuclease HII.